Consider the following 275-residue polypeptide: Orotidine 5'-phosphate decarboxylase (275 aa).

Lys101 functions as the Proton donor in the catalytic mechanism.

Belongs to the OMP decarboxylase family. Type 2 subfamily.

The catalysed reaction is orotidine 5'-phosphate + H(+) = UMP + CO2. It functions in the pathway pyrimidine metabolism; UMP biosynthesis via de novo pathway; UMP from orotate: step 2/2. The protein is Orotidine 5'-phosphate decarboxylase of Leptospira interrogans serogroup Icterohaemorrhagiae serovar Lai (strain 56601).